The following is a 360-amino-acid chain: Heme A synthase (360 aa).

9 consecutive transmembrane segments (helical) span residues 29 to 49 (WLFAMAALVIAMVAVGGATRL), 111 to 131 (FLGRLIGFAFFLPLGWFWWTG), 139 to 159 (LGLLGLGVLGGLQGAVGWIMV), 175 to 195 (LAAHLTLASAIFAGLVWLAAG), 210 to 230 (LTALALPLLMLVQIALGGLVA), 242 to 262 (PLMDGAFIPPLSGLFAVTPWI), 269 to 289 (VALVQLNHRLAAYGLLAVAAL), 309 to 329 (AILGLVTAQAALGITTLLLAV), and 330 to 350 (PLWAGLAHQVTAMLVLGMAAV). Position 276 (H276) interacts with heme. Heme is bound at residue H337.

It belongs to the COX15/CtaA family. Type 2 subfamily. Interacts with CtaB. It depends on heme b as a cofactor.

It localises to the cell membrane. It catalyses the reaction Fe(II)-heme o + 2 A + H2O = Fe(II)-heme a + 2 AH2. Its pathway is porphyrin-containing compound metabolism; heme A biosynthesis; heme A from heme O: step 1/1. In terms of biological role, catalyzes the conversion of heme O to heme A by two successive hydroxylations of the methyl group at C8. The first hydroxylation forms heme I, the second hydroxylation results in an unstable dihydroxymethyl group, which spontaneously dehydrates, resulting in the formyl group of heme A. The protein is Heme A synthase of Methylobacterium nodulans (strain LMG 21967 / CNCM I-2342 / ORS 2060).